Here is a 984-residue protein sequence, read N- to C-terminus: ETLMDTRTATAELGWTANPPSGWEEVSGYDENLNTIRTYQVCNVFEPNQNNWLLTTFINRRGAHRIYTEMRFTVRDCSSLPNVPGSCKETFNLYYYETDSVIATKKSAFWTEAPYLKVDTIAADESFSQVDFGGRLMKGXXXXXXXXXXXXXXXXXXXXXXXXXXXXXXXXXFFKKCPSVVQNFAIFPETMTGAESTSLVTARGTCIPNAEEVDVPIKLYCNGDGEWMVPIGRCTCKAGYEPENNVACRACPAGTFKASQGAGLCARCPPNSRSSAEASPLCACRNGYFRADLDPPTAACTSVPSGPRNVISIVNETSIILEWNPPRETGGRDDVTYNIVCKKCRADRRACSRCDDNVEFVPRQLGLTETRVFISSLWAHTPYTFEIQAVNGVSNKSPFPPQHVSVNITTNQAAPSTVPIMHQVSATMRSITLSWPQPEQPNGIILDYELRYYEKLSRICTPDVSGTVGSRPAADHNEYNSSVARSQTNTARLEGLRPGMVYVVQVRARTVAGYGKYSGKMCFQTLTDDDYKSELREQLPLIAGSAAAGVVFIVSLVAISIVCSRKRAYSKEVVYSDKLQHYSTGRGSPGMKIYIDPFTYEDPNEAVREFAKEIDVSFVKIEEVIGAGEFGEVYKGRLKLPGKREIYVAIKTLKAGYSEKQRRDFLSEASIMGQFDHPNIIRLEGVVTKSRPVMIITEFMENGALDSFLRQNDGQFTVIQLVGMLRGIAAGMKYLAEMNYVHRDLAARNILVNSNLVCKVSDFGLSRYLQDDTSDPTYTSSLGGKIPVRWTAPEAIAYRKFTSASDVWSYGIVMWEVMSFGERPYWDMSNQDVINAIEQDYRLPPPMDCPAALHQLMLDCWQKDRNTRPRLAEIVNTLDKMIRNPASLKTVATITAVPSQPLLDRSIPDFTAFTSVEDWLSAVKMSQYRDNFLSAGFTSLQLVAQMTSEDLLRIGVTLAGHQKKILNSIQSMRVQMSQSPTSMA.

An Eph LBD domain is found at 1 to 182 (ETLMDTRTAT…FFKKCPSVVQ (182 aa)). The Extracellular segment spans residues 1–541 (ETLMDTRTAT…KSELREQLPL (541 aa)). 2 consecutive Fibronectin type-III domains span residues 303–413 (VPSG…TNQA) and 414–528 (APST…TLTD). N-linked (GlcNAc...) asparagine glycans are attached at residues Asn315, Asn407, and Asn480. The helical transmembrane segment at 542–562 (IAGSAAAGVVFIVSLVAISIV) threads the bilayer. Residues 563–984 (CSRKRAYSKE…QMSQSPTSMA (422 aa)) lie on the Cytoplasmic side of the membrane. The Protein kinase domain occupies 619–882 (VKIEEVIGAG…EIVNTLDKMI (264 aa)). ATP is bound by residues 625–633 (IGAGEFGEV) and Lys651. Asp744 serves as the catalytic Proton acceptor. In terms of domain architecture, SAM spans 911–975 (TAFTSVEDWL…LNSIQSMRVQ (65 aa)). Positions 982-984 (SMA) match the PDZ-binding motif.

The protein belongs to the protein kinase superfamily. Tyr protein kinase family. Ephrin receptor subfamily. Heterotetramer upon binding of the ligand. The heterotetramer is composed of an ephrin dimer and a receptor dimer. Oligomerization is probably required to induce biological responses. Phosphorylated. Autophosphorylation is stimulated by ligands. In terms of tissue distribution, expressed at high levels in the 10-day embryo, and in adult brain, lung, heart and skeletal muscle. Low levels of expression detected in all other adult tissues tested.

Its subcellular location is the cell membrane. The protein resides in the early endosome membrane. It localises to the cell projection. It is found in the dendrite. The enzyme catalyses L-tyrosyl-[protein] + ATP = O-phospho-L-tyrosyl-[protein] + ADP + H(+). Functionally, receptor tyrosine kinase which binds promiscuously transmembrane ephrin-B family ligands residing on adjacent cells, leading to contact-dependent bidirectional signaling into neighboring cells. The signaling pathway downstream of the receptor is referred to as forward signaling while the signaling pathway downstream of the ephrin ligand is referred to as reverse signaling. May play a role in axon guidance during nervous system development. May also play an important redundant role with other ephrin-B receptors in development and maturation of dendritic spines and synapse formation. More generally, may play a role in targeted cell migration and adhesion. Upon activation by ephrin-B ligands activates the MAPK/ERK and the JNK signaling cascades to regulate cell migration and adhesion respectively. The sequence is that of Ephrin type-B receptor 1 (EPHB1) from Gallus gallus (Chicken).